The sequence spans 582 residues: Nif-specific regulatory protein (582 aa).

Residues 1-11 (MLHIPSSSERP) are compositionally biased toward polar residues. The interval 1–28 (MLHIPSSSERPASQPEPERAPPGEPSHE) is disordered. Residues 16–27 (EPERAPPGEPSH) are compositionally biased toward basic and acidic residues. The GAF domain maps to 46 to 188 (RLEVTLANVL…MVANVIGQTI (143 aa)). Residues 230–458 (IIGDSPALSA…LENCIERTAT (229 aa)) form the Sigma-54 factor interaction domain. Residues 258–265 (GESGTGKE) and 321–330 (ADKGTLFLDE) contribute to the ATP site. An inter-domain linker region spans residues 459–539 (LSAGTSIVRS…VLVSGARMAD (81 aa)). Cysteine 472 and cysteine 477 together coordinate a divalent metal cation. The C-terminal DNA-binding domain stretch occupies residues 540-582 (RERVVAAMEKSGWVQAKAARLLGLTPRQVGYALRKYGIEIKRF). Positions 554–573 (QAKAARLLGLTPRQVGYALR) form a DNA-binding region, H-T-H motif.

In terms of assembly, interacts with sigma-54.

Required for activation of most nif operons, which are directly involved in nitrogen fixation. The protein is Nif-specific regulatory protein (nifA) of Bradyrhizobium diazoefficiens (strain JCM 10833 / BCRC 13528 / IAM 13628 / NBRC 14792 / USDA 110).